Reading from the N-terminus, the 145-residue chain is uncharacterized protein (145 aa).

It to R.meliloti R00649.

This is an uncharacterized protein from Agrobacterium fabrum (strain C58 / ATCC 33970) (Agrobacterium tumefaciens (strain C58)).